The chain runs to 126 residues: MAIWQGSSLRKPSGARSRRNKNKRNAEFGRNPAETRIGDEVKKEIVARGNCTKTRATVAKRINVIDPKDNSSKNVEMLTVLENGANSHFVRRNIITKGAIVETEIGKAKITSRPGQKGIVNGVLIE.

The segment covering M1–R10 has biased composition (polar residues). The interval M1–T35 is disordered.

It belongs to the eukaryotic ribosomal protein eS8 family. As to quaternary structure, part of the 30S ribosomal subunit.

The chain is Small ribosomal subunit protein eS8 from Methanosphaera stadtmanae (strain ATCC 43021 / DSM 3091 / JCM 11832 / MCB-3).